The primary structure comprises 345 residues: MFIDSVKITLASGDGGKGAVSFRREKHVPLGGPDGGDGGNGGDIIFICDNNTHTLVNFKGKRELRAQNGAGGMGRNKNGKKGENLELVVPEGTQVIDAQTNEILLDLTKEGQRELFLKGGKGGLGNTHFKHATNQRPDYAQPGIKGESRLVRLELKLIADVGLVGFPNVGKSTLISVVSNAKPEIANYEFTTLTPKLGLVDVDEYNSFVMTDIPGIIQGASGGKGLGLAFLKHIERTSFLLFVLDPMREMLLKEQFIVLRKELEKFSDELFGRKFGIMISKSDSVNLGEEFAEQIALNINELENYLKEINNPQSFLIKVSSLEKTGLKELKFMLLEEIKALRNNK.

The Obg domain maps to 1–158; sequence MFIDSVKITL…RLVRLELKLI (158 aa). Residues 159-339 form the OBG-type G domain; the sequence is ADVGLVGFPN…LKFMLLEEIK (181 aa). GTP-binding positions include 165–172, 190–194, 212–215, 280–283, and 320–322; these read GFPNVGKS, FTTLT, DIPG, SKSD, and SSL. Mg(2+) contacts are provided by Ser172 and Thr192.

The protein belongs to the TRAFAC class OBG-HflX-like GTPase superfamily. OBG GTPase family. As to quaternary structure, monomer. The cofactor is Mg(2+).

It localises to the cytoplasm. Its function is as follows. An essential GTPase which binds GTP, GDP and possibly (p)ppGpp with moderate affinity, with high nucleotide exchange rates and a fairly low GTP hydrolysis rate. Plays a role in control of the cell cycle, stress response, ribosome biogenesis and in those bacteria that undergo differentiation, in morphogenesis control. The chain is GTPase Obg from Campylobacter jejuni subsp. doylei (strain ATCC BAA-1458 / RM4099 / 269.97).